The following is a 161-amino-acid chain: 2-C-methyl-D-erythritol 2,4-cyclodiphosphate synthase (161 aa).

A divalent metal cation-binding residues include D10 and H12. Residues 10 to 12 (DVH) and 36 to 37 (HS) contribute to the 4-CDP-2-C-methyl-D-erythritol 2-phosphate site. H44 provides a ligand contact to a divalent metal cation. 4-CDP-2-C-methyl-D-erythritol 2-phosphate contacts are provided by residues 58 to 60 (DIG), 63 to 67 (FSDTD), and R144.

Belongs to the IspF family. As to quaternary structure, homotrimer. The cofactor is a divalent metal cation.

It carries out the reaction 4-CDP-2-C-methyl-D-erythritol 2-phosphate = 2-C-methyl-D-erythritol 2,4-cyclic diphosphate + CMP. It participates in isoprenoid biosynthesis; isopentenyl diphosphate biosynthesis via DXP pathway; isopentenyl diphosphate from 1-deoxy-D-xylulose 5-phosphate: step 4/6. Functionally, involved in the biosynthesis of isopentenyl diphosphate (IPP) and dimethylallyl diphosphate (DMAPP), two major building blocks of isoprenoid compounds. Catalyzes the conversion of 4-diphosphocytidyl-2-C-methyl-D-erythritol 2-phosphate (CDP-ME2P) to 2-C-methyl-D-erythritol 2,4-cyclodiphosphate (ME-CPP) with a corresponding release of cytidine 5-monophosphate (CMP). The polypeptide is 2-C-methyl-D-erythritol 2,4-cyclodiphosphate synthase (Burkholderia ambifaria (strain MC40-6)).